The following is a 210-amino-acid chain: Thymidylate kinase (210 aa).

Position 10–17 (10–17 (GLEGAGKS)) interacts with ATP.

It belongs to the thymidylate kinase family.

It catalyses the reaction dTMP + ATP = dTDP + ADP. Phosphorylation of dTMP to form dTDP in both de novo and salvage pathways of dTTP synthesis. In Hamiltonella defensa subsp. Acyrthosiphon pisum (strain 5AT), this protein is Thymidylate kinase.